A 494-amino-acid polypeptide reads, in one-letter code: Probable malate:quinone oxidoreductase (494 aa).

This sequence belongs to the MQO family. Requires FAD as cofactor.

It catalyses the reaction (S)-malate + a quinone = a quinol + oxaloacetate. It participates in carbohydrate metabolism; tricarboxylic acid cycle; oxaloacetate from (S)-malate (quinone route): step 1/1. The chain is Probable malate:quinone oxidoreductase from Micrococcus luteus (strain ATCC 4698 / DSM 20030 / JCM 1464 / CCM 169 / CCUG 5858 / IAM 1056 / NBRC 3333 / NCIMB 9278 / NCTC 2665 / VKM Ac-2230) (Micrococcus lysodeikticus).